The following is a 369-amino-acid chain: Leucine carboxyl methyltransferase 1 (369 aa).

S-adenosyl-L-methionine is bound by residues Arg-84, Gly-108, Asp-132, 187-188 (DL), and Glu-215.

It belongs to the methyltransferase superfamily. LCMT family.

It carries out the reaction [phosphatase 2A protein]-C-terminal L-leucine + S-adenosyl-L-methionine = [phosphatase 2A protein]-C-terminal L-leucine methyl ester + S-adenosyl-L-homocysteine. In terms of biological role, methylates the carboxyl group of the C-terminal leucine residue of protein phosphatase 2A catalytic subunits to form alpha-leucine ester residues. This chain is Leucine carboxyl methyltransferase 1 (PPM1), found in Debaryomyces hansenii (strain ATCC 36239 / CBS 767 / BCRC 21394 / JCM 1990 / NBRC 0083 / IGC 2968) (Yeast).